The chain runs to 547 residues: Ganoderic acid synthetase CYP5150L8 (547 aa).

A helical transmembrane segment spans residues 2–22; that stretch reads PDSSLVLVAIAGAAYIFWLVF. Cys-487 is a heme binding site.

This sequence belongs to the cytochrome P450 family. Heme serves as cofactor.

Its subcellular location is the membrane. It catalyses the reaction lanosterol + reduced [NADPH--hemoprotein reductase] + O2 = 26-hydroxylanosterol + oxidized [NADPH--hemoprotein reductase] + H2O + H(+). The enzyme catalyses 26-hydroxylanosterol + reduced [NADPH--hemoprotein reductase] + O2 = 26-oxolanosterol + oxidized [NADPH--hemoprotein reductase] + 2 H2O + H(+). It carries out the reaction 26-oxolanosterol + reduced [NADPH--hemoprotein reductase] + O2 = 3beta-hydroxy-lanosta-8, 24-dien-26-oate + oxidized [NADPH--hemoprotein reductase] + H2O + 2 H(+). It functions in the pathway secondary metabolite biosynthesis; terpenoid biosynthesis. Cytochrome P450 monooxygenase that is involved in the biosynthesis of ganoderic acids (GA), a group of highly oxygenated lanostane-type triterpenoids which well recognized as a main group of unique bioactive compounds in the medicinal mushroom Ganoderma lucidum. CYP5150L8 alone is able to catalyze the three-step oxidations at C-26 from lanosterol to 3-hydroxy-lanosta-8,24-dien-26-oic acid (also called ganoderic acid Z or HLDOA). The methyl group of lanosterol at C-26 is first oxidized into hydroxyl group to form 3-hydroxy-lanosta-8,24-dien-26-ol (HLDO). The hydroxyl group at C-26 of HLDO is further converted into a formyl group to form 3-hydroxy-lanosta-8,24-dien-26-al (HLDA). Finally, the formyl group is oxidized into a carboxyl group to produce 3-hydroxy-lanosta-8,24-dien-26-oic acid (HLDOA). The polypeptide is Ganoderic acid synthetase CYP5150L8 (Ganoderma lucidum (Ling zhi medicinal fungus)).